Here is a 293-residue protein sequence, read N- to C-terminus: GDT1-like protein 3 (293 aa).

The N-terminal stretch at 1-25 is a signal peptide; that stretch reads MGLISNPTRLILVATIFFLVSSISG. A run of 6 helical transmembrane segments spans residues 89–109, 115–135, 148–168, 200–220, 238–258, and 272–292; these read FSMI…ALMA, ATVL…STGL, TNSA…YIAW, LFSR…FLAE, AIGV…LAVV, and VATV…FYPP.

This sequence belongs to the GDT1 family.

The protein resides in the membrane. This Arabidopsis thaliana (Mouse-ear cress) protein is GDT1-like protein 3.